The chain runs to 299 residues: Taste receptor type 2 member 1 (299 aa).

At 1-9 (MLESHLIIY) the chain is on the extracellular side. The helical transmembrane segment at 10 to 30 (FLLAVIQFLLGIFTNGIIVVV) threads the bilayer. Topologically, residues 31–55 (NGIDLIKHRKMAPLDLLLSCLAVSR) are cytoplasmic. A helical membrane pass occupies residues 56–76 (IFLQLFIFYVNVIVIFFIEFI). The Extracellular portion of the chain corresponds to 77-81 (MCSAN). Residues 82-102 (CAILLFVNELELWLATWLGVF) traverse the membrane as a helical segment. Topologically, residues 103–124 (YCAKVASVRHPLFIWLKMRISK) are cytoplasmic. A helical membrane pass occupies residues 125 to 145 (LVPWMILGSLLYVSMICVFHS). Over 146–178 (KYAGFMVPHFLRNFFSQNATIQKEDTLAIQIFS) the chain is Extracellular. The N-linked (GlcNAc...) asparagine glycan is linked to Asn163. A helical membrane pass occupies residues 179–199 (FVAEFSVPLLIFLVAVLLLIF). At 200–222 (SLGRHTRQMRNTVAGSRVPGRGA) the chain is on the cytoplasmic side. The chain crosses the membrane as a helical span at residues 223–243 (PISALLSILSFLILYFSHCMI). The Extracellular portion of the chain corresponds to 244 to 257 (KVFLSSLKFHVRRF). A helical transmembrane segment spans residues 258-278 (IFLFFILVIGIYPSGHSLILI). Residues 279–299 (LGNPKLKQNAKKFLLHSKCCQ) are Cytoplasmic-facing.

The protein belongs to the G-protein coupled receptor T2R family.

Its subcellular location is the membrane. In terms of biological role, receptor that may play a role in the perception of bitterness and is gustducin-linked. May play a role in sensing the chemical composition of the gastrointestinal content. The activity of this receptor may stimulate alpha gustducin, mediate PLC-beta-2 activation and lead to the gating of TRPM5. The chain is Taste receptor type 2 member 1 (TAS2R1) from Pan paniscus (Pygmy chimpanzee).